A 60-amino-acid chain; its full sequence is Myrmicitoxin(1)-Pr4c (60 aa).

The N-terminal stretch at 1-23 (MKAIIFLFAVLTVVAIIIPIISG) is a signal peptide. Residues 24 to 33 (EPNAGPHAAS) constitute a propeptide that is removed on maturation. Glutamine 59 is modified (glutamine amide).

Belongs to the formicidae venom clade 2 family. As to expression, expressed by the venom gland.

The protein resides in the secreted. Its function is as follows. Toxin that causes a rapid and irreversible paralysis when intrathoracically injected into insects (blowflies). Does not cause spontaneous nocifensive behaviors by intraplantar injection in mice. The sequence is that of Myrmicitoxin(1)-Pr4c from Pogonomyrmex rugosus (Desert harvester ant).